The following is a 329-amino-acid chain: Dolichyl-diphosphooligosaccharide--protein glycosyltransferase subunit MAGT1 (329 aa).

Positions 1 to 23 are cleaved as a signal peptide; that stretch reads MAGLKGLLFGGILFAMCGGLSEG. Residues 24–178 are Extracellular-facing; it reads QKKKEMVLSD…DVNIRVIRPP (155 aa). Residues 41–169 enclose the Thioredoxin domain; it reads WASKRPVIRM…LARWVADRTD (129 aa). N65 carries N-linked (GlcNAc...) asparagine glycosylation. A disulfide bond links C81 and C84. Residues 179–199 form a helical membrane-spanning segment; that stretch reads NYAGPLMLGLLLAVIGGLVYL. Over 200-212 the chain is Cytoplasmic; that stretch reads RRSNLDFLNNKTG. A helical membrane pass occupies residues 213–233; sequence WALAALCFVLAMTSGQMWNHI. Topologically, residues 234–258 are extracellular; the sequence is RGPPYAHKNPHTNQVNYIHGSSQAQ. A helical transmembrane segment spans residues 259-279; that stretch reads FVAETHIVLLFNGAVTLGMVL. Residues 280–294 are Cytoplasmic-facing; the sequence is LHEAATSDLDVGKRK. A helical membrane pass occupies residues 295-315; the sequence is IMCIAGITLVVIFFSWLLSVF. The Extracellular portion of the chain corresponds to 316–329; it reads RSKYHGYPYSFLMT.

This sequence belongs to the OST3/OST6 family. In terms of assembly, accessory component of the STT3B-containing form of the oligosaccharyltransferase (OST) complex.

It is found in the cell membrane. It localises to the endoplasmic reticulum. The protein resides in the endoplasmic reticulum membrane. Its pathway is protein modification; protein glycosylation. Its function is as follows. Accessory component of the STT3B-containing form of the N-oligosaccharyl transferase (OST) complex which catalyzes the transfer of a high mannose oligosaccharide from a lipid-linked oligosaccharide donor to an asparagine residue within an Asn-X-Ser/Thr consensus motif in nascent polypeptide chains. May be involved in substrate-specific N-glycosylation involving acceptor sites that are near cysteine residues. Could indirectly play a role in Mg(2+) transport in epithelial cells. The chain is Dolichyl-diphosphooligosaccharide--protein glycosyltransferase subunit MAGT1 from Xenopus laevis (African clawed frog).